Here is a 280-residue protein sequence, read N- to C-terminus: 4-deoxy-L-threo-5-hexosulose-uronate ketol-isomerase 1 (280 aa).

4 residues coordinate Zn(2+): H198, H200, E205, and H247.

It belongs to the KduI family. The cofactor is Zn(2+).

The catalysed reaction is 5-dehydro-4-deoxy-D-glucuronate = 3-deoxy-D-glycero-2,5-hexodiulosonate. Its pathway is glycan metabolism; pectin degradation; 2-dehydro-3-deoxy-D-gluconate from pectin: step 4/5. Catalyzes the isomerization of 5-dehydro-4-deoxy-D-glucuronate to 3-deoxy-D-glycero-2,5-hexodiulosonate. In Bacteroides thetaiotaomicron (strain ATCC 29148 / DSM 2079 / JCM 5827 / CCUG 10774 / NCTC 10582 / VPI-5482 / E50), this protein is 4-deoxy-L-threo-5-hexosulose-uronate ketol-isomerase 1 (kduI1).